Reading from the N-terminus, the 66-residue chain is Protein KleD (66 aa).

The H-T-H motif DNA-binding region spans 33–52 (VAVRSGNEWQQVTKWVEPAR).

The chain is Protein KleD (kleD) from Escherichia coli.